Consider the following 200-residue polypeptide: Inner membrane-spanning protein YciB (200 aa).

6 helical membrane-spanning segments follow: residues 1 to 21 (MPPL…FFAN), 37 to 57 (IGAP…IALA), 66 to 86 (LPIM…LTLW), 103 to 123 (LFGG…GYVF), 136 to 156 (KLTL…EIVW), and 167 to 187 (FKVW…MPLI).

This sequence belongs to the YciB family.

It is found in the cell inner membrane. Plays a role in cell envelope biogenesis, maintenance of cell envelope integrity and membrane homeostasis. In Brucella suis biovar 1 (strain 1330), this protein is Inner membrane-spanning protein YciB.